Consider the following 562-residue polypeptide: Teichoic acid ribitol-phosphate polymerase TarL (562 aa).

It belongs to the CDP-glycerol glycerophosphotransferase family.

It localises to the cell membrane. The enzyme catalyses 4-O-[di(2R)-glycerylphospho]-N-acetyl-beta-D-mannosaminyl-(1-&gt;4)-N-acetyl-alpha-D-glucosaminyl di-trans,octa-cis-undecaprenyl diphosphate + n CDP-L-ribitol = 4-O-[(D-ribitylphospho)(n)-di{(2R)-glycerylphospho}]-N-acetyl-beta-D-mannosaminyl-(1-&gt;4)-N-acetyl-alpha-D-glucosaminyl di-trans,octa-cis-undecaprenyl diphosphate + n CMP + n H(+). Its pathway is cell wall biogenesis; poly(ribitol phosphate) teichoic acid biosynthesis. Responsible for the polymerization of the main chain of the major teichoic acid by sequential transfer of ribitol phosphate units from CDP-ribitol to the second glycerol phosphate attached to the disaccharide linkage unit. Synthesizes polymers of more than 40 ribitol phosphate units in length. The chain is Teichoic acid ribitol-phosphate polymerase TarL (tarL) from Staphylococcus aureus (strain NCTC 8325 / PS 47).